Reading from the N-terminus, the 372-residue chain is Putative glutamate--cysteine ligase 2 (372 aa).

Belongs to the glutamate--cysteine ligase type 2 family. YbdK subfamily. As to quaternary structure, homodimer.

It catalyses the reaction L-cysteine + L-glutamate + ATP = gamma-L-glutamyl-L-cysteine + ADP + phosphate + H(+). Functionally, ATP-dependent carboxylate-amine ligase which exhibits weak glutamate--cysteine ligase activity. This chain is Putative glutamate--cysteine ligase 2, found in Citrobacter koseri (strain ATCC BAA-895 / CDC 4225-83 / SGSC4696).